The chain runs to 182 residues: UPF0690 protein C1orf52 (182 aa).

2 disordered regions span residues 1–67 (MAAE…RSVT) and 100–182 (WKSN…KKKK). The segment covering 23-32 (SDEEDNIEPE) has biased composition (acidic residues). Over residues 50–63 (NKAEKRLPGPDELF) the composition is skewed to basic and acidic residues. Thr67 is subject to Phosphothreonine. Residue Tyr132 is modified to Phosphotyrosine. A compositionally biased stretch (acidic residues) spans 151-162 (EGEETLESDDEK). Ser158 is modified (phosphoserine). Over residues 172–182 (VEPGEPAKKKK) the composition is skewed to basic and acidic residues.

It belongs to the UPF0690 family. In terms of tissue distribution, expressed in all tissues tested including heart, placenta, liver, skeletal muscle, kidney and pancreas. Weak expression in brain and lung.

The sequence is that of UPF0690 protein C1orf52 (C1orf52) from Homo sapiens (Human).